A 123-amino-acid polypeptide reads, in one-letter code: MRSLLVLLALAACASAQFFIRGGDDDNGFFGDDDNGYYYPRYFPIYNRFPIYRPIYYRPQIYYPIYRPIFGYGGYGYGGYGGYGYGGYGYGGYGYGGYGGYGYNPYSYGGFYRFGDDDNGFDD.

An N-terminal signal peptide occupies residues 1–16 (MRSLLVLLALAACASA).

As to expression, prismatic layer of shell (at protein level). Expressed primarily in the mantle with highest level in the mantle edge and lower level in the mantle pallium.

Its subcellular location is the secreted. In terms of biological role, may be involved in calcification of the prismatic layer of the shell. The sequence is that of Prismalin-14 from Margaritifera margaritifera (Freshwater pearl mussel).